The sequence spans 154 residues: MAQSINITELNLPQLEMLKNQLDQEVEFLSTSIAQLKVVQTKYVEAKDCLNVLNKSNEGKELLVPLTSSMYVPGKLHDVEHVLIDVGTGYYVEKTAEDAKDFFKRKIDFLTKQMEKIQPALQEKHAMKQAVMEMMSQKIQQLTALGAAQATAKA.

Ala2 is subject to N-acetylalanine. Position 42 is an N6-acetyllysine (Lys42). Ser56 carries the phosphoserine modification.

This sequence belongs to the prefoldin subunit alpha family. As to quaternary structure, heterohexamer of two PFD-alpha type and four PFD-beta type subunits. Binds to MYC; interacts with its N-terminal domain. As to expression, highly expressed in pancreas and skeletal muscle and moderately in other tissues.

The protein resides in the nucleus. Its subcellular location is the cytoplasm. Its function is as follows. Binds specifically to cytosolic chaperonin (c-CPN) and transfers target proteins to it. Binds to nascent polypeptide chain and promotes folding in an environment in which there are many competing pathways for nonnative proteins. Represses the transcriptional activity of MYC. In Homo sapiens (Human), this protein is Prefoldin subunit 5 (PFDN5).